We begin with the raw amino-acid sequence, 273 residues long: Probable branched-chain-amino-acid aminotransferase (273 aa).

The residue at position 133 (lysine 133) is an N6-(pyridoxal phosphate)lysine.

The protein belongs to the class-IV pyridoxal-phosphate-dependent aminotransferase family. The cofactor is pyridoxal 5'-phosphate.

It catalyses the reaction L-leucine + 2-oxoglutarate = 4-methyl-2-oxopentanoate + L-glutamate. It carries out the reaction L-isoleucine + 2-oxoglutarate = (S)-3-methyl-2-oxopentanoate + L-glutamate. The enzyme catalyses L-valine + 2-oxoglutarate = 3-methyl-2-oxobutanoate + L-glutamate. It participates in amino-acid biosynthesis; L-isoleucine biosynthesis; L-isoleucine from 2-oxobutanoate: step 4/4. The protein operates within amino-acid biosynthesis; L-leucine biosynthesis; L-leucine from 3-methyl-2-oxobutanoate: step 4/4. It functions in the pathway amino-acid biosynthesis; L-valine biosynthesis; L-valine from pyruvate: step 4/4. In terms of biological role, acts on leucine, isoleucine and valine. The sequence is that of Probable branched-chain-amino-acid aminotransferase (ilvE) from Thermotoga maritima (strain ATCC 43589 / DSM 3109 / JCM 10099 / NBRC 100826 / MSB8).